We begin with the raw amino-acid sequence, 372 residues long: Lipoyl synthase, mitochondrial (372 aa).

[4Fe-4S] cluster is bound by residues cysteine 103, cysteine 108, cysteine 114, cysteine 134, cysteine 138, cysteine 141, and serine 349. Positions 119–338 (EHGTQTATIM…EERGNQLGFL (220 aa)) constitute a Radical SAM core domain.

The protein belongs to the radical SAM superfamily. Lipoyl synthase family. [4Fe-4S] cluster serves as cofactor.

Its subcellular location is the mitochondrion. It catalyses the reaction [[Fe-S] cluster scaffold protein carrying a second [4Fe-4S](2+) cluster] + N(6)-octanoyl-L-lysyl-[protein] + 2 oxidized [2Fe-2S]-[ferredoxin] + 2 S-adenosyl-L-methionine + 4 H(+) = [[Fe-S] cluster scaffold protein] + N(6)-[(R)-dihydrolipoyl]-L-lysyl-[protein] + 4 Fe(3+) + 2 hydrogen sulfide + 2 5'-deoxyadenosine + 2 L-methionine + 2 reduced [2Fe-2S]-[ferredoxin]. The protein operates within protein modification; protein lipoylation via endogenous pathway; protein N(6)-(lipoyl)lysine from octanoyl-[acyl-carrier-protein]: step 2/2. In terms of biological role, catalyzes the radical-mediated insertion of two sulfur atoms into the C-6 and C-8 positions of the octanoyl moiety bound to the lipoyl domains of lipoate-dependent enzymes, thereby converting the octanoylated domains into lipoylated derivatives. This chain is Lipoyl synthase, mitochondrial, found in Drosophila willistoni (Fruit fly).